Consider the following 452-residue polypeptide: Proline--tRNA ligase (452 aa).

Belongs to the class-II aminoacyl-tRNA synthetase family. ProS type 2 subfamily. As to quaternary structure, homodimer.

The protein resides in the cytoplasm. The enzyme catalyses tRNA(Pro) + L-proline + ATP = L-prolyl-tRNA(Pro) + AMP + diphosphate. In terms of biological role, catalyzes the attachment of proline to tRNA(Pro) in a two-step reaction: proline is first activated by ATP to form Pro-AMP and then transferred to the acceptor end of tRNA(Pro). In Jannaschia sp. (strain CCS1), this protein is Proline--tRNA ligase.